We begin with the raw amino-acid sequence, 293 residues long: Zinc metalloproteinase nas-2 (293 aa).

The first 17 residues, 1–17 (MIFPLLLTLILPNFVAP), serve as a signal peptide directing secretion. Residues 18–67 (KVLEPEKDDEIAVSTQREKTFFDMKLILTKLPTFEPSKYGHINIPLRKKR) constitute a propeptide that is removed on maturation. Residues 67–260 (RGIALHPLQW…ININTFYKCK (194 aa)) form the Peptidase M12A domain. N111 is a glycosylation site (N-linked (GlcNAc...) asparagine). Cystine bridges form between C114-C259 and C139-C169. Residue H180 coordinates Zn(2+). Residue E181 is part of the active site. 2 residues coordinate Zn(2+): H184 and H190. The N-linked (GlcNAc...) asparagine glycan is linked to N287.

Requires Zn(2+) as cofactor.

The protein localises to the secreted. In terms of biological role, metalloprotease. The polypeptide is Zinc metalloproteinase nas-2 (nas-2) (Caenorhabditis elegans).